The primary structure comprises 695 residues: Phosphate acetyltransferase (695 aa).

A phosphate acetyltransferase region spans residues A372–R695.

In the N-terminal section; belongs to the CobB/CobQ family. This sequence in the C-terminal section; belongs to the phosphate acetyltransferase and butyryltransferase family. As to quaternary structure, homohexamer.

The protein resides in the cytoplasm. It catalyses the reaction acetyl-CoA + phosphate = acetyl phosphate + CoA. The protein operates within metabolic intermediate biosynthesis; acetyl-CoA biosynthesis; acetyl-CoA from acetate: step 2/2. Involved in acetate metabolism. This chain is Phosphate acetyltransferase (pta), found in Nitrosomonas europaea (strain ATCC 19718 / CIP 103999 / KCTC 2705 / NBRC 14298).